Consider the following 289-residue polypeptide: Bis(5'-nucleosyl)-tetraphosphatase, symmetrical (289 aa).

Belongs to the Ap4A hydrolase family.

The catalysed reaction is P(1),P(4)-bis(5'-adenosyl) tetraphosphate + H2O = 2 ADP + 2 H(+). In terms of biological role, hydrolyzes diadenosine 5',5'''-P1,P4-tetraphosphate to yield ADP. This is Bis(5'-nucleosyl)-tetraphosphatase, symmetrical from Yersinia pseudotuberculosis serotype O:3 (strain YPIII).